We begin with the raw amino-acid sequence, 472 residues long: MSSSNNSLNNKAQAWSARFAEPVDELVQRYTASIGFDQRFAMVDIAGSLAHAEMLATQKIISAQDLADIQKGMAQIQSEIEAGQFEWQLALEDVHLNIEARLTQLVGDAGKRLHTGRSRNDQVATDLRLWLRGSVDEIALTLKSLRVALLDLAEKHASTIMPGHTHLQVAQPITFGHHLMAYFEMFSRDASRLADLRARFNRLPLGAAALAGTTYPINREQVAKALGFDGTCNNSLDAVSDRDFAIEFCAFASILMMHVSRLSEELILWLSPRFGFIDLPDRFCTGSSIMPQKKNPDVPELARGKTGRVYGDLISLLTLMKGQPLAYNKDDQEDKEPLFDAVDTVQDTLRIFADMVPHIEVKSEAMKKAAEEGFATATDLADYLVKKGLAFRDAHEAVAHAVKACVGRNCMLTDLSLSELRFACGLDNRPELIGDDVFVLLTVDGSVQSRQHAGGTAPAQVLAAIKRGRADL.

It belongs to the lyase 1 family. Argininosuccinate lyase subfamily.

It localises to the cytoplasm. It carries out the reaction 2-(N(omega)-L-arginino)succinate = fumarate + L-arginine. The protein operates within amino-acid biosynthesis; L-arginine biosynthesis; L-arginine from L-ornithine and carbamoyl phosphate: step 3/3. The polypeptide is Argininosuccinate lyase (Polynucleobacter necessarius subsp. necessarius (strain STIR1)).